A 254-amino-acid chain; its full sequence is Coiled-coil domain-containing protein 152 (254 aa).

The stretch at Ser61–Asp246 forms a coiled coil.

In terms of tissue distribution, detected in stomach.

This is Coiled-coil domain-containing protein 152 (CCDC152) from Homo sapiens (Human).